Here is a 439-residue protein sequence, read N- to C-terminus: 3-phosphoshikimate 1-carboxyvinyltransferase (439 aa).

Residues Lys-21, Ser-22, and Arg-26 each coordinate 3-phosphoshikimate. Lys-21 provides a ligand contact to phosphoenolpyruvate. 2 residues coordinate phosphoenolpyruvate: Gly-94 and Arg-122. Residues Ser-167, Gln-169, Asp-320, and Lys-347 each contribute to the 3-phosphoshikimate site. Residue Gln-169 coordinates phosphoenolpyruvate. Asp-320 functions as the Proton acceptor in the catalytic mechanism. Arg-351 and Arg-395 together coordinate phosphoenolpyruvate.

It belongs to the EPSP synthase family. Monomer.

It localises to the cytoplasm. The catalysed reaction is 3-phosphoshikimate + phosphoenolpyruvate = 5-O-(1-carboxyvinyl)-3-phosphoshikimate + phosphate. It participates in metabolic intermediate biosynthesis; chorismate biosynthesis; chorismate from D-erythrose 4-phosphate and phosphoenolpyruvate: step 6/7. In terms of biological role, catalyzes the transfer of the enolpyruvyl moiety of phosphoenolpyruvate (PEP) to the 5-hydroxyl of shikimate-3-phosphate (S3P) to produce enolpyruvyl shikimate-3-phosphate and inorganic phosphate. The polypeptide is 3-phosphoshikimate 1-carboxyvinyltransferase (Hyphomonas neptunium (strain ATCC 15444)).